A 186-amino-acid chain; its full sequence is Holliday junction branch migration complex subunit RuvA (186 aa).

The segment at 1–61 (MYRYIKGIVT…EDIFQLYGFK (61 aa)) is domain I. The segment at 62–134 (DEETLNLFLK…LKGKLVNDEL (73 aa)) is domain II. The flexible linker stretch occupies residues 134-137 (LDMQ). The domain III stretch occupies residues 138–186 (LLSDNSKDVAAALEALGYNKKEIAKSLKHVNFDQDLNKALKEALAILLK).

This sequence belongs to the RuvA family. Homotetramer. Forms an RuvA(8)-RuvB(12)-Holliday junction (HJ) complex. HJ DNA is sandwiched between 2 RuvA tetramers; dsDNA enters through RuvA and exits via RuvB. An RuvB hexamer assembles on each DNA strand where it exits the tetramer. Each RuvB hexamer is contacted by two RuvA subunits (via domain III) on 2 adjacent RuvB subunits; this complex drives branch migration. In the full resolvosome a probable DNA-RuvA(4)-RuvB(12)-RuvC(2) complex forms which resolves the HJ.

It localises to the cytoplasm. Functionally, the RuvA-RuvB-RuvC complex processes Holliday junction (HJ) DNA during genetic recombination and DNA repair, while the RuvA-RuvB complex plays an important role in the rescue of blocked DNA replication forks via replication fork reversal (RFR). RuvA specifically binds to HJ cruciform DNA, conferring on it an open structure. The RuvB hexamer acts as an ATP-dependent pump, pulling dsDNA into and through the RuvAB complex. HJ branch migration allows RuvC to scan DNA until it finds its consensus sequence, where it cleaves and resolves the cruciform DNA. This chain is Holliday junction branch migration complex subunit RuvA, found in Acholeplasma laidlawii (strain PG-8A).